Consider the following 150-residue polypeptide: uncharacterized protein (150 aa).

Positions 5–66 (LDRTDKMLLE…KPNYKKLNLG (62 aa)) constitute an HTH asnC-type domain. The segment at residues 24 to 43 (IAALSKKLGIPRTTVHYRIK) is a DNA-binding region (H-T-H motif).

This is an uncharacterized protein from Pyrococcus furiosus (strain ATCC 43587 / DSM 3638 / JCM 8422 / Vc1).